Here is a 2134-residue protein sequence, read N- to C-terminus: Tudor domain-containing protein 6 (2134 aa).

Residues 287–315 (RAPVGTDDEDSGSATWEEREESPDKPGSP) form a disordered region. Thr-292 carries the post-translational modification Phosphothreonine. 4 consecutive Tudor domains span residues 309 to 368 (PDKP…YFRM), 542 to 599 (RPEP…FRQL), 820 to 879 (YEGD…FFQV), and 1038 to 1092 (TLAP…AHDV). The tract at residues 1271 to 1296 (SPMSGTKLDSALPERRMGEPSGRDLP) is disordered. Basic and acidic residues predominate over residues 1282–1296 (LPERRMGEPSGRDLP). Tudor domains follow at residues 1358-1417 (QWQS…DAVL) and 1570-1630 (CPQI…LLLV). Disordered regions lie at residues 1699–1733 (KKYAKTGVPKNDLSSEKRGPERKGSLASPDLGLKK) and 1860–1885 (LQHSPAGEEEKEELGLGSPMAPLSPG). The span at 1711–1722 (LSSEKRGPERKG) shows a compositional bias: basic and acidic residues. Phosphoserine is present on residues Ser-1723 and Ser-1726. A Phosphoserine modification is found at Ser-1925. Polar residues predominate over residues 1930 to 1939 (AVSQDIQGSR). The tract at residues 1930-1985 (AVSQDIQGSRCSEDERKAGYMGSSDDDHSRSPLLQHGKGGNSPAHDGRNLSEEEFP) is disordered. 3 positions are modified to phosphoserine: Ser-1980, Ser-2063, and Ser-2115.

As to quaternary structure, found in a mRNP complex (i.e. messenger ribonucleoproteins which correspond to mRNA with bound proteins), at least composed of TDRD1, TDRD6, TDRD7 and DDX4. Found in a complex, at least composed of PIWIL1, PIWIL2, DDX4 and TDRD6. Interacts with Tex19.1 and probably Tex19.2. Interacts with PRMT5. Interacts with SNRPB (when methylated); to trigger spliceosome formation. Undergoes proteolytic cleavage near the C-terminal by an unknown protease during the transition from meiosis I to meiosis II in primary spermatocytes. In terms of tissue distribution, testis specific. Expressed in primary spermatocytes at post natal (PN) day 17.5. Expressed in midpachytene stage of primary spermatocytes at PN16 and in round spermatids at PN22 (at protein level).

It localises to the cytoplasm. Its function is as follows. Tudor domain-containing protein involved in germ cell development, more specifically the formation of chromatoid body (during spermiogenesis), Balbiani body (during oogenesis), germ plasm (upon fertilization), and for proper miRNA expression and spliceosome maturation. Essential for RNA-dependent helicase UPF1 localization to chromatoid body, for UPF1-UPF2 and UPF1-DDX4 interactions which are required for mRNA degradation, using the extended 3' UTR-triggered nonsense-mediated mRNA decay (NMD) pathway. Involved in spliceosome maturation and mRNA splicing in prophase I spermatocytes through interaction with arginine N-methyltransferase PRMT5 and symmetrically arginine dimethylated SNRPB (small nuclear ribonucleoprotein-associated protein). This chain is Tudor domain-containing protein 6, found in Mus musculus (Mouse).